The following is a 922-amino-acid chain: Disintegrin and metalloproteinase domain-containing protein 10 homolog (922 aa).

The N-terminal stretch at M1 to G26 is a signal peptide. Residues L27–R228 constitute a propeptide that is removed on maturation. N-linked (GlcNAc...) asparagine glycans are attached at residues N74, N185, and N346. Over A229–N745 the chain is Extracellular. Residues R242–L480 enclose the Peptidase M12B domain. Residue H426 coordinates Zn(2+). E427 is a catalytic residue. Zn(2+)-binding residues include H430 and H436. Residues C442 and C471 are joined by a disulfide bond. N475 carries an N-linked (GlcNAc...) asparagine glycan. Residues S511 to D615 form the Disintegrin domain. Intrachain disulfides connect C542–C577, C564–C572, C588–C607, C594–C626, and C619–C631. N632 is a glycosylation site (N-linked (GlcNAc...) asparagine). 4 disulfides stabilise this stretch: C636/C659, C644/C665, C655/C707, and C700/C713. Residue N677 is glycosylated (N-linked (GlcNAc...) asparagine). The helical transmembrane segment at W746–C766 threads the bilayer. The Cytoplasmic segment spans residues C767 to K922. Disordered regions lie at residues Q797–P837 and P864–K922. A compositionally biased stretch (low complexity) spans A805–P834.

May interact with tetraspanin tsp-12; the interaction promotes sup-17 cell membrane localization. Zn(2+) serves as cofactor. As to expression, expressed in the germline.

The protein resides in the cell membrane. It localises to the basolateral cell membrane. The protein localises to the cytoplasmic vesicle membrane. It catalyses the reaction Endopeptidase of broad specificity.. In terms of biological role, metalloprotease. Acts together with protease adm-4 and in a cell autonomous manner to facilitate lin-12/Notch signaling during developmental cell fate decision, including anchor cell/ventral uterine precursor cell decision and vulva precursor cell specification. By modulating glp-1/Notch signaling, plays a role in germline development. Probably by modulating BMP-like Sma/Mab signaling via the shedding of unc-40 ectodomain, involved in the regulation of body size and mesoderm development. Probably by shedding ephrin efn-4, regulates axon guidance of SDQL neuron during development. This chain is Disintegrin and metalloproteinase domain-containing protein 10 homolog, found in Caenorhabditis elegans.